The primary structure comprises 125 residues: Major intrinsically disordered NOTCH2-binding receptor 1-like (125 aa).

N-linked (GlcNAc...) asparagine glycosylation occurs at Asn37. The chain crosses the membrane as a helical span at residues 100 to 120 (FAFITLFVCAVVIIITVPIVV).

Belongs to the MINAR family. In terms of assembly, interacts with NOTCH2. Highly expressed in the auditory hair cells.

It is found in the lysosome membrane. It localises to the endoplasmic reticulum membrane. Functionally, binds cholesterol and may regulate the distribution and homeostasis of cholesterol in hair cells. May play a role in angiogenesis. This chain is Major intrinsically disordered NOTCH2-binding receptor 1-like, found in Danio rerio (Zebrafish).